Consider the following 875-residue polypeptide: Serine/threonine-protein phosphatase 4 regulatory subunit 4 (875 aa).

2 HEAT repeats span residues I215–V253 and V254–T292. Residues M686–S730 are a coiled coil. Residues K718 to R739 show a composition bias toward basic and acidic residues. The segment at K718–T773 is disordered. Residues T740–S764 show a composition bias toward polar residues. The residue at position 777 (S777) is a Phosphoserine. A Phosphothreonine modification is found at T799. Residues R825–K859 show a composition bias toward polar residues. Residues R825–P875 form a disordered region. Basic residues predominate over residues A866–P875.

Serine/threonine-protein phosphatase 4 (PP4) occurs in different assemblies of the catalytic and one or more regulatory subunits. Component of the PP4 complex PPP4C-PPP4R4.

The protein resides in the cytoplasm. Putative regulatory subunit of serine/threonine-protein phosphatase 4. The protein is Serine/threonine-protein phosphatase 4 regulatory subunit 4 (Ppp4r4) of Mus musculus (Mouse).